Here is a 78-residue protein sequence, read N- to C-terminus: MKSATLLALSFLLIASCFLICEAEHSRYEEHEILEENMGDVVNLEQRSCAKPGEMCMRIKCCDGQCGCNRGTGRCFCK.

Positions Met-1–Ala-23 are cleaved as a signal peptide. The propeptide occupies Glu-24–Arg-47. 3 cysteine pairs are disulfide-bonded: Cys-49/Cys-62, Cys-56/Cys-66, and Cys-61/Cys-77.

It belongs to the hainantoxin family. 20 subfamily. In terms of tissue distribution, expressed by the venom gland.

The protein resides in the secreted. Putative ion channel inhibitor. The protein is Hainantoxin-XX.3 of Cyriopagopus hainanus (Chinese bird spider).